Consider the following 123-residue polypeptide: uncharacterized protein (123 aa).

Helical transmembrane passes span 7–29 (VKHL…FDAV), 44–66 (FFIH…VHRI), and 79–101 (LGLY…AAMA).

The protein localises to the cell membrane. This is an uncharacterized protein from Bacillus subtilis (strain 168).